We begin with the raw amino-acid sequence, 358 residues long: Mannonate dehydratase (358 aa).

This sequence belongs to the mannonate dehydratase family. It depends on Fe(2+) as a cofactor. The cofactor is Mn(2+).

It catalyses the reaction D-mannonate = 2-dehydro-3-deoxy-D-gluconate + H2O. Its pathway is carbohydrate metabolism; pentose and glucuronate interconversion. Functionally, catalyzes the dehydration of D-mannonate. The sequence is that of Mannonate dehydratase from Lachnoclostridium phytofermentans (strain ATCC 700394 / DSM 18823 / ISDg) (Clostridium phytofermentans).